Here is a 209-residue protein sequence, read N- to C-terminus: Ribosomal RNA large subunit methyltransferase E (209 aa).

Residues Gly-63, Trp-65, Asp-83, Asp-99, and Asp-124 each contribute to the S-adenosyl-L-methionine site. Catalysis depends on Lys-164, which acts as the Proton acceptor.

This sequence belongs to the class I-like SAM-binding methyltransferase superfamily. RNA methyltransferase RlmE family.

It is found in the cytoplasm. It carries out the reaction uridine(2552) in 23S rRNA + S-adenosyl-L-methionine = 2'-O-methyluridine(2552) in 23S rRNA + S-adenosyl-L-homocysteine + H(+). In terms of biological role, specifically methylates the uridine in position 2552 of 23S rRNA at the 2'-O position of the ribose in the fully assembled 50S ribosomal subunit. The sequence is that of Ribosomal RNA large subunit methyltransferase E from Serratia proteamaculans (strain 568).